The following is a 231-amino-acid chain: Large ribosomal subunit protein uL1 (231 aa).

The protein belongs to the universal ribosomal protein uL1 family. As to quaternary structure, part of the 50S ribosomal subunit.

In terms of biological role, binds directly to 23S rRNA. The L1 stalk is quite mobile in the ribosome, and is involved in E site tRNA release. Protein L1 is also a translational repressor protein, it controls the translation of the L11 operon by binding to its mRNA. The chain is Large ribosomal subunit protein uL1 from Mycoplasmopsis agalactiae (strain NCTC 10123 / CIP 59.7 / PG2) (Mycoplasma agalactiae).